An 833-amino-acid chain; its full sequence is Prickle-like protein 1 (833 aa).

The segment at 1–22 is disordered; the sequence is MPLEMDQKISKHTFGCQRSSTS. The PET domain occupies 14–122; it reads FGCQRSSTSD…NIKMLSRAVM (109 aa). LIM zinc-binding domains follow at residues 124 to 188, 189 to 249, and 250 to 313; these read AMCE…ELLK, PRCS…HYAE, and YCES…EDVH. 5 disordered regions span residues 312 to 346, 432 to 456, 603 to 702, 767 to 786, and 805 to 833; these read VHAS…ADQC, EDNR…RNSR, CQEK…ERNP, CSSS…QPIP, and NALS…CIIS. 2 stretches are compositionally biased toward basic and acidic residues: residues 432–453 and 603–614; these read EDNR…DLQR and CQEKPPPEEKPM. A compositionally biased stretch (basic residues) spans 669–680; that stretch reads RPHHHRRRKSRK. Residues 817–833 show a composition bias toward basic residues; that stretch reads TKSKKKKGHKGKNCIIS. C830 is modified (cysteine methyl ester). C830 is lipidated: S-farnesyl cysteine. Residues 831 to 833 constitute a propeptide, removed in mature form; that stretch reads IIS.

It belongs to the prickle / espinas / testin family. As to quaternary structure, interacts with dvl2/dsh and mapk8/jnk1.

Its subcellular location is the cell membrane. Acts in a planar cell polarity (PCP) complex; polarization along the apical/basal axis of epithelial cells. Regulates the polarized assembly of fibronectrin on the surface of the mesoderm during gastrulation. Essential for gastrulation cell movements, cooperating with dvl2/dsh to activate jnk. Acts together with tes to control axial elongation. The chain is Prickle-like protein 1 from Xenopus tropicalis (Western clawed frog).